Here is a 94-residue protein sequence, read N- to C-terminus: Anaphase-promoting complex subunit 11 (94 aa).

Residues 35-78 (CPQCTSPGDNCPIVWGKCKHIFHAHCIQNWLATSGSQGQCPMDR) form an RING-type zinc finger.

The APC/C is composed of at least 13 subunits: apc1, apc2, nuc2, apc4, apc5, cut9, apc8, apc10, apc11, hcn1, apc13, apc14 and apc15.

Its function is as follows. Component of the anaphase-promoting complex/cyclosome (APC/C), a cell cycle-regulated E3 ubiquitin-protein ligase complex that controls progression through mitosis and the G1 phase of the cell cycle. The APC/C is thought to confer substrate specificity and, in the presence of ubiquitin-conjugating E2 enzymes, it catalyzes the formation of protein-ubiquitin conjugates that are subsequently degraded by the 26S proteasome. The chain is Anaphase-promoting complex subunit 11 (apc11) from Schizosaccharomyces pombe (strain 972 / ATCC 24843) (Fission yeast).